A 97-amino-acid polypeptide reads, in one-letter code: Putative septation protein SpoVG (97 aa).

It belongs to the SpoVG family.

In terms of biological role, could be involved in septation. In Borrelia garinii subsp. bavariensis (strain ATCC BAA-2496 / DSM 23469 / PBi) (Borreliella bavariensis), this protein is Putative septation protein SpoVG.